A 262-amino-acid chain; its full sequence is Small ribosomal subunit protein eS1 (262 aa).

The protein belongs to the eukaryotic ribosomal protein eS1 family. In terms of assembly, component of the small ribosomal subunit. Mature ribosomes consist of a small (40S) and a large (60S) subunit. The 40S subunit contains about 33 different proteins and 1 molecule of RNA (18S). The 60S subunit contains about 49 different proteins and 3 molecules of RNA (25S, 5.8S and 5S).

Its subcellular location is the cytoplasm. The sequence is that of Small ribosomal subunit protein eS1 from Plasmodium knowlesi (strain H).